A 249-amino-acid chain; its full sequence is MNNIKITIQYDGTDFYGWQIQPNLRTVQGEIYKAVQKVYGEKITIYGCGRTDAGVHALGQVANFRVPKMLVPINKVHIALNSYLDRDLRIIKAEEMPDSFNARASATFREYLYIVHNSSTSFPFYERYAWFYRKNVIDEKLINEYARYLIGEHNFTSFCSTEDENDSKFRYLERVKAIRKGDTIYFIIRGNAFLHNMVRIIVGTLVEGQKKKKPINFIEDILKSEDRAKAFVTAPAHGLYFRRAFFKDE.

D52 (nucleophile) is an active-site residue. Y111 contacts substrate.

Belongs to the tRNA pseudouridine synthase TruA family. In terms of assembly, homodimer.

It catalyses the reaction uridine(38/39/40) in tRNA = pseudouridine(38/39/40) in tRNA. In terms of biological role, formation of pseudouridine at positions 38, 39 and 40 in the anticodon stem and loop of transfer RNAs. This chain is tRNA pseudouridine synthase A, found in Brachyspira hyodysenteriae (strain ATCC 49526 / WA1).